The following is a 187-amino-acid chain: ATP synthase subunit b 2 (187 aa).

A helical membrane pass occupies residues 39–61 (SQLVWLVLSFAALYLLMSRVALP).

This sequence belongs to the ATPase B chain family. In terms of assembly, F-type ATPases have 2 components, F(1) - the catalytic core - and F(0) - the membrane proton channel. F(1) has five subunits: alpha(3), beta(3), gamma(1), delta(1), epsilon(1). F(0) has three main subunits: a(1), b(2) and c(10-14). The alpha and beta chains form an alternating ring which encloses part of the gamma chain. F(1) is attached to F(0) by a central stalk formed by the gamma and epsilon chains, while a peripheral stalk is formed by the delta and b chains.

Its subcellular location is the cell inner membrane. Functionally, f(1)F(0) ATP synthase produces ATP from ADP in the presence of a proton or sodium gradient. F-type ATPases consist of two structural domains, F(1) containing the extramembraneous catalytic core and F(0) containing the membrane proton channel, linked together by a central stalk and a peripheral stalk. During catalysis, ATP synthesis in the catalytic domain of F(1) is coupled via a rotary mechanism of the central stalk subunits to proton translocation. Its function is as follows. Component of the F(0) channel, it forms part of the peripheral stalk, linking F(1) to F(0). This is ATP synthase subunit b 2 from Parvibaculum lavamentivorans (strain DS-1 / DSM 13023 / NCIMB 13966).